A 2339-amino-acid chain; its full sequence is Voltage-dependent N-type calcium channel subunit alpha-1B (2339 aa).

Residues 1-90 are Cytoplasmic-facing; that stretch reads MVRFGDELGG…DNVVRKYAKR (90 aa). The span at 15–34 shows a compositional bias: gly residues; it reads AGGAERARGGGAGGAGGPGP. The disordered stretch occupies residues 15–37; it reads AGGAERARGGGAGGAGGPGPGGL. R22 carries the post-translational modification Omega-N-methylarginine. The I repeat unit spans residues 82-359; it reads NVVRKYAKRI…LVLGVLSGEF (278 aa). The helical transmembrane segment at 91–114 threads the bilayer; that stretch reads ITEWPPFEYMILATIIANCIVLAL. Residues 115–131 are Extracellular-facing; it reads EQHLPDGDKTPMSERLD. A helical membrane pass occupies residues 132–152; it reads DTEPYFIGIFCFEAGIKILAL. Residues 153–163 lie on the Cytoplasmic side of the membrane; that stretch reads GFVLHKGSYLR. A helical transmembrane segment spans residues 164–182; it reads NGWNVMDFVVVLTGILATA. Over 183-187 the chain is Extracellular; it reads GTDFD. Residues 188-211 traverse the membrane as a helical segment; it reads LRTLRAVRVLRPLKLVSGIPSLQV. The Cytoplasmic portion of the chain corresponds to 212-221; sequence VLKSIMKAMV. Residues 222 to 244 traverse the membrane as a helical segment; that stretch reads PLLQIGLLLFFAILMFAIIGLEF. Residues 245-331 lie on the Extracellular side of the membrane; sequence YMGKFHKACF…NTNDAAGNTW (87 aa). The N-linked (GlcNAc...) asparagine glycan is linked to N256. Residues 332–356 form a helical membrane-spanning segment; that stretch reads NWLYFIPLIIIGSFFMLNLVLGVLS. Over 357 to 483 the chain is Cytoplasmic; it reads GEFAKERERV…FFIRRMVKAQ (127 aa). The binding to the beta subunit stretch occupies residues 379 to 396; that stretch reads QQIERELNGYLEWIFKAE. S411 bears the Phosphoserine mark. 452–459 contacts ATP; the sequence is ASLKSGKT. The stretch at 469–713 is one II repeat; that stretch reads EKMFRFFIRR…VFLAIAVDNL (245 aa). Residues 484 to 502 traverse the membrane as a helical segment; it reads SFYWTVLCVVALNTLCVAM. Topologically, residues 503–512 are extracellular; the sequence is VHYNQPQRLT. Residues 513–535 traverse the membrane as a helical segment; sequence TALYFAEFVFLGLFLTEMSLKMY. Residues 536-545 lie on the Cytoplasmic side of the membrane; sequence GLGPRSYFRS. Residue S545 participates in a 1,2-diacyl-sn-glycero-3-phospho-(1D-myo-inositol-4,5-bisphosphate) binding. The helical transmembrane segment at 546–567 threads the bilayer; it reads SFNCFDFGVIVGSIFEVVWAAV. Topologically, residues 568-574 are extracellular; sequence KPGTSFG. The helical transmembrane segment at 575–587 threads the bilayer; that stretch reads ISVLRALRLLRIF. Residues R585 and K588 each contribute to the a 1,2-diacyl-sn-glycero-3-phospho-(1D-myo-inositol-4,5-bisphosphate) site. At 588 to 605 the chain is on the cytoplasmic side; that stretch reads KVTKYWNSLRNLVVSLLN. Residues 606-631 form a helical membrane-spanning segment; sequence SMKSIISLLFLLFLFIVVFALLGMQL. At 632–683 the chain is on the extracellular side; the sequence is FGGQFNFKDETPTTNFDTFPAAILTVFQILTGEDWNAVMYHGIESQGGVSRG. A helical membrane pass occupies residues 684–710; sequence MFSSFYFIVLTLFGNYTLLNVFLAIAV. At 711–1156 the chain is on the cytoplasmic side; sequence DNLANAQELT…CCHYIVTMRY (446 aa). Residues S746, S749, and S784 each carry the phosphoserine modification. 5 stretches are compositionally biased toward basic and acidic residues: residues 809-827, 870-891, 927-937, 973-984, and 999-1026; these read DVKT…RDAP, EQDR…EERG, GSPEEAAEREP, CPREAESSEEPA, and TAEK…RNHQ. Disordered stretches follow at residues 809 to 1026 and 1056 to 1084; these read DVKT…RNHQ and VEEQ…TTVH. A compositionally biased stretch (polar residues) spans 1066–1083; the sequence is QRNVTRMGSQPPDTSTTV. At S1074 the chain carries Phosphoserine. The III repeat unit spans residues 1142–1424; that stretch reads NLLRRCCHYI…IFVALIIITF (283 aa). Residues 1157–1175 form a helical membrane-spanning segment; sequence FEMVILVVIALSSIALAAE. Over 1176–1183 the chain is Extracellular; it reads DPVRTDSP. The chain crosses the membrane as a helical span at residues 1184–1208; that stretch reads RNNALKYMDYIFTGVFTFEMVIKMI. Over 1209 to 1222 the chain is Cytoplasmic; the sequence is DLGLLLHPGAYFRD. Residues 1223–1243 traverse the membrane as a helical segment; sequence LWNILDFIVVSGALVAFAFSG. The Extracellular segment spans residues 1244 to 1249; that stretch reads SKGKDI. Residues 1250–1270 form a helical membrane-spanning segment; sequence STIKSLRVLRVLRPLKTIKRL. Topologically, residues 1271-1288 are cytoplasmic; sequence PKLKAVFDCVVNSLKNVL. A helical membrane pass occupies residues 1289–1308; it reads NILIVYMLFMFIFAVIAVQL. Residues 1309 to 1395 are Extracellular-facing; that stretch reads FKGKFFYCTD…EQGPSPGYRM (87 aa). Residues 1396–1421 traverse the membrane as a helical segment; the sequence is ELSIFYVVYFVVFPFFFVNIFVALII. The Cytoplasmic segment spans residues 1422–1476; it reads ITFQEQGDKVMSECSLEKNERACIDFAISARPLTRYMPQNKQSFQYKTWTFVVSP. The stretch at 1461–1714 is one IV repeat; sequence NKQSFQYKTW…LFVAVIMDNF (254 aa). The chain crosses the membrane as a helical span at residues 1477 to 1495; the sequence is PFEYFIMAMIALNTVVLMM. At 1496 to 1503 the chain is on the extracellular side; that stretch reads KFYDAPYE. Residues 1504–1528 traverse the membrane as a helical segment; it reads YELMLKCLNIVFTSMFSMECVLKII. Over 1529 to 1538 the chain is Cytoplasmic; it reads AFGVLNYFRD. Residues 1539–1560 form a helical membrane-spanning segment; it reads AWNVFDFVTVLGSITDILVTEI. Residues 1561 to 1566 lie on the Extracellular side of the membrane; that stretch reads ANNFIN. A glycan (N-linked (GlcNAc...) asparagine) is linked at N1566. The helical transmembrane segment at 1567 to 1585 threads the bilayer; the sequence is LSFLRLFRAARLIKLLRQG. Residues 1586-1604 lie on the Cytoplasmic side of the membrane; sequence YTIRILLWTFVQSFKALPY. A helical transmembrane segment spans residues 1605–1624; that stretch reads VCLLIAMLFFIYAIIGMQVF. Over 1625 to 1686 the chain is Extracellular; sequence GNIALDDDTS…SNASECGSDF (62 aa). Residue N1678 is glycosylated (N-linked (GlcNAc...) asparagine). A helical transmembrane segment spans residues 1687–1710; that stretch reads AYFYFVSFIFLCSFLMLNLFVAVI. Over 1711–2339 the chain is Cytoplasmic; the sequence is MDNFEYLTRD…CHHPDRDRRC (629 aa). Positions 1727-1762 constitute an EF-hand domain; the sequence is HHLDEFIRVWAEYDPAACGRISYSDMFEMLKHMSPP. 3 residues coordinate Ca(2+): D1740, R1746, and D1751. Residues 1983-2312 form a disordered region; it reads TLSGPDAEPQ…QPPPLRRVPN (330 aa). A compositionally biased stretch (basic residues) spans 2050–2064; it reads PHHHHHRCHRRRDRK. Position 2067 is a phosphoserine (S2067). Residues 2099–2136 are compositionally biased toward basic and acidic residues; that stretch reads CRRERERRQERGRSQERRQPSSSSSEKHRFYSCDRFGG. Composition is skewed to polar residues over residues 2144–2155 and 2165–2181; these read PSLSSHPTSPTA and GSGS…SGAS. 3 positions are modified to phosphoserine: S2224, S2233, and S2256. Residues 2286-2302 are compositionally biased toward low complexity; the sequence is SNSGRSSRTSYVSSLTS.

It belongs to the calcium channel alpha-1 subunit (TC 1.A.1.11) family. CACNA1B subfamily. Multisubunit complex consisting of alpha-1, alpha-2, beta and delta subunits in a 1:1:1:1 ratio. The channel activity is directed by the pore-forming and voltage-sensitive alpha-1 subunit. In many cases, this subunit is sufficient to generate voltage-sensitive calcium channel activity. The auxiliary subunits beta and alpha-2/delta linked by a disulfide bridge regulate the channel activity. Interacts with RIMS1. Interacts with FMR1 (via C-terminus); this interaction induces a decrease in the number of presynaptic functional CACNA1B channels at the cell surface. Phosphorylated in vitro by CaM-kinase II, PKA, PKC and CGPK. Widespread expression throughout the brain. Highest levels in corpus striatum and midbrain.

It is found in the membrane. It carries out the reaction Ca(2+)(in) = Ca(2+)(out). With respect to regulation, is specifically blocked by omega-conotoxin GVIA. Is specifically blocked by omega-conotoxin MVIIA (ziconotide). Is insensitive to dihydropyridines (DHP). Voltage-sensitive calcium channels (VSCC) mediate the entry of calcium ions into excitable cells and are also involved in a variety of calcium-dependent processes, including muscle contraction, hormone or neurotransmitter release, gene expression, cell motility, cell division and cell death. This alpha-1B subunit gives rise to N-type calcium currents. N-type calcium channels belong to the 'high-voltage activated' (HVA) group. They are involved in pain signaling. Calcium channels containing alpha-1B subunit may play a role in directed migration of immature neurons. Mediates Ca(2+) release probability at hippocampal neuronal soma and synaptic terminals. The chain is Voltage-dependent N-type calcium channel subunit alpha-1B (CACNA1B) from Oryctolagus cuniculus (Rabbit).